The chain runs to 201 residues: Probable nicotinate-nucleotide adenylyltransferase (201 aa).

It belongs to the NadD family.

It catalyses the reaction nicotinate beta-D-ribonucleotide + ATP + H(+) = deamido-NAD(+) + diphosphate. It functions in the pathway cofactor biosynthesis; NAD(+) biosynthesis; deamido-NAD(+) from nicotinate D-ribonucleotide: step 1/1. In terms of biological role, catalyzes the reversible adenylation of nicotinate mononucleotide (NaMN) to nicotinic acid adenine dinucleotide (NaAD). The polypeptide is Probable nicotinate-nucleotide adenylyltransferase (Clostridium botulinum (strain Kyoto / Type A2)).